A 1042-amino-acid polypeptide reads, in one-letter code: Ubiquitin carboxyl-terminal hydrolase 38 (1042 aa).

Positions 445-949 constitute a USP domain; the sequence is TGLINLGNTC…TAYVLLYKKQ (505 aa). C454 (nucleophile) is an active-site residue. H857 acts as the Proton acceptor in catalysis.

This sequence belongs to the peptidase C19 family. In terms of assembly, interacts with isoform 1 of FBXW7; this interaction prevents FBXW7-mediated degradation of MYC.

The protein resides in the cytoplasm. It is found in the nucleus. It carries out the reaction Thiol-dependent hydrolysis of ester, thioester, amide, peptide and isopeptide bonds formed by the C-terminal Gly of ubiquitin (a 76-residue protein attached to proteins as an intracellular targeting signal).. Its function is as follows. Deubiquitinating enzyme that plays a role in various cellular processes, including DNA repair, cell cycle regulation, and immune response. Plays a role in the inhibition of type I interferon signaling by mediating the 'Lys-33' to 'Lys-48' ubiquitination transition of TBK1 leading to its degradation. Cleaves the ubiquitin chain from the histone demethylase LSD1/KDM1A and prevents it from degradation by the 26S proteasome, thus maintaining LSD1 protein level in cells. Plays a role in the DNA damage response by regulating the deacetylase activity of HDAC1. Mechanistically, removes the 'Lys-63'-linked ubiquitin chain promoting the deacetylase activity of HDAC1 in response to DNA damage. Also acts as a specific deubiquitinase of histone deacetylase 3/HDAC3 and cleaves its 'Lys-63'-linked ubiquitin chains to lower its histone deacetylase activity. Regulates MYC levels and cell proliferation via antagonizing ubiquitin E3 ligase FBXW7 thereby preventing MYC 'Lys-48'-linked ubiquitination and degradation. Participates in antiviral response by removing both 'Lys-48'-linked and 'Lys-63'-linked polyubiquitination of Zika virus envelope protein E. Constitutively associated with IL-33R/IL1RL1, deconjugates its 'Lys-27'-linked polyubiquitination resulting in its autophagic degradation. The chain is Ubiquitin carboxyl-terminal hydrolase 38 (Usp38) from Mus musculus (Mouse).